The chain runs to 230 residues: N-(5'-phosphoribosyl)anthranilate isomerase (230 aa).

This sequence belongs to the TrpF family.

The catalysed reaction is N-(5-phospho-beta-D-ribosyl)anthranilate = 1-(2-carboxyphenylamino)-1-deoxy-D-ribulose 5-phosphate. Its pathway is amino-acid biosynthesis; L-tryptophan biosynthesis; L-tryptophan from chorismate: step 3/5. This is N-(5'-phosphoribosyl)anthranilate isomerase from Trichodesmium erythraeum (strain IMS101).